The primary structure comprises 309 residues: ADP-L-glycero-D-manno-heptose-6-epimerase (309 aa).

NADP(+) contacts are provided by residues 10–11 (MI), 31–32 (DN), Lys-38, Lys-53, 75–79 (EGACS), and Asn-92. Catalysis depends on Tyr-139, which acts as the Proton acceptor. Lys-143 is a binding site for NADP(+). Position 168 (Asn-168) interacts with substrate. Residues Val-169 and Lys-177 each contribute to the NADP(+) site. The active-site Proton acceptor is Lys-177. Substrate-binding positions include Ser-179, His-186, 200 to 203 (FDGS), Arg-208, and Tyr-271.

Belongs to the NAD(P)-dependent epimerase/dehydratase family. HldD subfamily. In terms of assembly, homopentamer. NADP(+) is required as a cofactor.

The catalysed reaction is ADP-D-glycero-beta-D-manno-heptose = ADP-L-glycero-beta-D-manno-heptose. Its pathway is nucleotide-sugar biosynthesis; ADP-L-glycero-beta-D-manno-heptose biosynthesis; ADP-L-glycero-beta-D-manno-heptose from D-glycero-beta-D-manno-heptose 7-phosphate: step 4/4. Its function is as follows. Catalyzes the interconversion between ADP-D-glycero-beta-D-manno-heptose and ADP-L-glycero-beta-D-manno-heptose via an epimerization at carbon 6 of the heptose. In Serratia proteamaculans (strain 568), this protein is ADP-L-glycero-D-manno-heptose-6-epimerase.